A 569-amino-acid polypeptide reads, in one-letter code: Proline--tRNA ligase (569 aa).

The protein belongs to the class-II aminoacyl-tRNA synthetase family. ProS type 1 subfamily. As to quaternary structure, homodimer.

It localises to the cytoplasm. It catalyses the reaction tRNA(Pro) + L-proline + ATP = L-prolyl-tRNA(Pro) + AMP + diphosphate. Its function is as follows. Catalyzes the attachment of proline to tRNA(Pro) in a two-step reaction: proline is first activated by ATP to form Pro-AMP and then transferred to the acceptor end of tRNA(Pro). As ProRS can inadvertently accommodate and process non-cognate amino acids such as alanine and cysteine, to avoid such errors it has two additional distinct editing activities against alanine. One activity is designated as 'pretransfer' editing and involves the tRNA(Pro)-independent hydrolysis of activated Ala-AMP. The other activity is designated 'posttransfer' editing and involves deacylation of mischarged Ala-tRNA(Pro). The misacylated Cys-tRNA(Pro) is not edited by ProRS. The chain is Proline--tRNA ligase from Campylobacter jejuni subsp. doylei (strain ATCC BAA-1458 / RM4099 / 269.97).